Consider the following 188-residue polypeptide: Transcription factor FapR (188 aa).

Belongs to the FapR family.

Functionally, transcriptional factor involved in regulation of membrane lipid biosynthesis by repressing genes involved in fatty acid and phospholipid metabolism. This Bacillus velezensis (strain DSM 23117 / BGSC 10A6 / LMG 26770 / FZB42) (Bacillus amyloliquefaciens subsp. plantarum) protein is Transcription factor FapR.